The chain runs to 417 residues: Ankyrin repeat and SAM domain-containing protein 4B (417 aa).

The interval 1 to 252 (MSTRYHQAAS…SGDFKEKLQL (252 aa)) is mediates localization to microvilli. ANK repeat units follow at residues 31-60 (DGMTPTLLAAYHGNLEALEIICSRGGDPDR), 64-93 (WGNTPLHFAASNGHAHCVSFLVNFGANIFA), and 97-126 (DLQTPLDAAASREQNECVALLDKAATAQNI). Residues 130–164 (KKVTRLKEQAQKNARRQIKECERLQEKHQNKMAHT) are a coiled coil. The tract at residues 151 to 195 (ERLQEKHQNKMAHTYSKEESGTLSSSKGTFSRSSPSNASAPGTFG) is disordered. The span at 171–190 (GTLSSSKGTFSRSSPSNASA) shows a compositional bias: polar residues. The interval 253 to 346 (SAEEDGSVHH…EWEEDVVDAT (94 aa)) is mediates interaction with MYO7B. S283 bears the Phosphoserine mark. A disordered region spans residues 305–330 (RQGASEADEGAADEEGEENGLKDDLP). Residues 310–322 (EADEGAADEEGEE) show a composition bias toward acidic residues. One can recognise an SAM domain in the interval 351–403 (FLLSQHLEEFLPIFKREQIDLEALLLCSDEDLQSIQMQLGPRKKVLNAINRRK). Positions 415–417 (TSL) match the PDZ-binding; mediates interaction with USH1C motif.

Part of the IMAC/intermicrovillar adhesion complex/intermicrovillar tip-link complex composed of ANKS4B, MYO7B, USH1C, CDHR2 and CDHR5. Interacts with USH1C; the interaction is direct and is required for ANKS4B localization to the tip of microvilli. Interacts with MYO7B; the interaction is direct. May interact with HSPA5. In terms of tissue distribution, expressed in kidney and small intestine.

The protein localises to the cell projection. The protein resides in the microvillus. Its function is as follows. As part of the intermicrovillar adhesion complex/IMAC plays a role in epithelial brush border differentiation, controlling microvilli organization and length. Plays a role in assembly of the complex. May play a role in cellular response to endoplasmic reticulum stress. The protein is Ankyrin repeat and SAM domain-containing protein 4B of Homo sapiens (Human).